The following is a 78-amino-acid chain: Major outer membrane lipoprotein Lpp (78 aa).

Positions 1-19 (MKAKIVLGAVILASGLLAG) are cleaved as a signal peptide. A lipid anchor (N-palmitoyl cysteine) is attached at C20. The S-diacylglycerol cysteine moiety is linked to residue C20. 2 repeats span residues 25-35 (NAQLDQISSDV) and 39-49 (NTQVQQLSSDV). Positions 28–62 (LDQISSDVNRLNTQVQQLSSDVQSANAQAKAAYEA) form a coiled coil. The residue at position 78 (K78) is an N6-murein peptidoglycan lysine.

The protein belongs to the Lpp family. As to quaternary structure, homotrimer.

It localises to the cell outer membrane. The protein resides in the secreted. The protein localises to the cell wall. A highly abundant outer membrane lipoprotein that controls the distance between the inner and outer membranes. The only protein known to be covalently linked to the peptidoglycan network (PGN). Also non-covalently binds the PGN. The link between the cell outer membrane and PGN contributes to maintenance of the structural and functional integrity of the cell envelope, and maintains the correct distance between the PGN and the outer membrane. This is Major outer membrane lipoprotein Lpp from Proteus mirabilis.